The chain runs to 91 residues: MIENILIIDNYDSFTYNLYQYVGEISPNIEVYRNDKITLEKIEEMNPTHIIISPGPGFPKDAGICIEAIRKFGRYIPILGVCLGHQAIGEA.

One can recognise a Glutamine amidotransferase type-1 domain in the interval 4–91; sequence NILIIDNYDS…CLGHQAIGEA (88 aa). Residue 55–57 coordinates L-glutamine; sequence GPG. The active-site Nucleophile; for GATase activity is the C82. Q86 provides a ligand contact to L-glutamine.

As to quaternary structure, heterotetramer consisting of two non-identical subunits: a beta subunit (TrpG) and a large alpha subunit (TrpE).

It catalyses the reaction chorismate + L-glutamine = anthranilate + pyruvate + L-glutamate + H(+). Its pathway is amino-acid biosynthesis; L-tryptophan biosynthesis; L-tryptophan from chorismate: step 1/5. Its function is as follows. Part of a heterotetrameric complex that catalyzes the two-step biosynthesis of anthranilate, an intermediate in the biosynthesis of L-tryptophan. In the first step, the glutamine-binding beta subunit (TrpG) of anthranilate synthase (AS) provides the glutamine amidotransferase activity which generates ammonia as a substrate that, along with chorismate, is used in the second step, catalyzed by the large alpha subunit of AS (TrpE) to produce anthranilate. In the absence of TrpG, TrpE can synthesize anthranilate directly from chorismate and high concentrations of ammonia. The protein is Anthranilate synthase component 2 (trpG) of Acetivibrio thermocellus (Hungateiclostridium thermocellum).